The primary structure comprises 161 residues: S-ribosylhomocysteine lyase (161 aa).

Fe cation is bound by residues H57, H61, and C127.

Belongs to the LuxS family. In terms of assembly, homodimer. Fe cation serves as cofactor.

It carries out the reaction S-(5-deoxy-D-ribos-5-yl)-L-homocysteine = (S)-4,5-dihydroxypentane-2,3-dione + L-homocysteine. Involved in the synthesis of autoinducer 2 (AI-2) which is secreted by bacteria and is used to communicate both the cell density and the metabolic potential of the environment. The regulation of gene expression in response to changes in cell density is called quorum sensing. Catalyzes the transformation of S-ribosylhomocysteine (RHC) to homocysteine (HC) and 4,5-dihydroxy-2,3-pentadione (DPD). The protein is S-ribosylhomocysteine lyase of Streptococcus equi subsp. equi (strain 4047).